A 453-amino-acid polypeptide reads, in one-letter code: Bifunctional protein GlmU (453 aa).

The tract at residues 1-225 is pyrophosphorylase; the sequence is MNIVILAAGT…EWETLGVNSK (225 aa). UDP-N-acetyl-alpha-D-glucosamine contacts are provided by residues 6-9, Lys-20, Gln-71, 76-77, 98-100, Gly-135, Glu-150, Asn-165, and Asn-223; these read LAAG, GT, and YGD. Asp-100 is a binding site for Mg(2+). Asn-223 is a Mg(2+) binding site. The tract at residues 226-246 is linker; it reads QQLAELERIHQRNVADDLLVA. The tract at residues 247 to 453 is N-acetyltransferase; that stretch reads GVTIADPARI…GYVRPTKKKS (207 aa). Arg-329 and Lys-347 together coordinate UDP-N-acetyl-alpha-D-glucosamine. The Proton acceptor role is filled by His-359. UDP-N-acetyl-alpha-D-glucosamine-binding residues include Tyr-362 and Asn-373. Acetyl-CoA is bound by residues Ala-376, 382–383, Ser-401, and Ala-419; that span reads NY.

The protein in the N-terminal section; belongs to the N-acetylglucosamine-1-phosphate uridyltransferase family. This sequence in the C-terminal section; belongs to the transferase hexapeptide repeat family. In terms of assembly, homotrimer. The cofactor is Mg(2+).

It localises to the cytoplasm. It catalyses the reaction alpha-D-glucosamine 1-phosphate + acetyl-CoA = N-acetyl-alpha-D-glucosamine 1-phosphate + CoA + H(+). The catalysed reaction is N-acetyl-alpha-D-glucosamine 1-phosphate + UTP + H(+) = UDP-N-acetyl-alpha-D-glucosamine + diphosphate. Its pathway is nucleotide-sugar biosynthesis; UDP-N-acetyl-alpha-D-glucosamine biosynthesis; N-acetyl-alpha-D-glucosamine 1-phosphate from alpha-D-glucosamine 6-phosphate (route II): step 2/2. The protein operates within nucleotide-sugar biosynthesis; UDP-N-acetyl-alpha-D-glucosamine biosynthesis; UDP-N-acetyl-alpha-D-glucosamine from N-acetyl-alpha-D-glucosamine 1-phosphate: step 1/1. It participates in bacterial outer membrane biogenesis; LPS lipid A biosynthesis. Catalyzes the last two sequential reactions in the de novo biosynthetic pathway for UDP-N-acetylglucosamine (UDP-GlcNAc). The C-terminal domain catalyzes the transfer of acetyl group from acetyl coenzyme A to glucosamine-1-phosphate (GlcN-1-P) to produce N-acetylglucosamine-1-phosphate (GlcNAc-1-P), which is converted into UDP-GlcNAc by the transfer of uridine 5-monophosphate (from uridine 5-triphosphate), a reaction catalyzed by the N-terminal domain. This is Bifunctional protein GlmU from Paraburkholderia phymatum (strain DSM 17167 / CIP 108236 / LMG 21445 / STM815) (Burkholderia phymatum).